Consider the following 196-residue polypeptide: Large ribosomal subunit protein uL6 (196 aa).

The protein belongs to the universal ribosomal protein uL6 family. As to quaternary structure, part of the 50S ribosomal subunit.

Functionally, this protein binds to the 23S rRNA, and is important in its secondary structure. It is located near the subunit interface in the base of the L7/L12 stalk, and near the tRNA binding site of the peptidyltransferase center. The sequence is that of Large ribosomal subunit protein uL6 from Pyrobaculum aerophilum (strain ATCC 51768 / DSM 7523 / JCM 9630 / CIP 104966 / NBRC 100827 / IM2).